Here is a 453-residue protein sequence, read N- to C-terminus: Chromosomal replication initiator protein DnaA (453 aa).

The interval 1–74 (MKEKQFWNRI…GFEIYDAEIT (74 aa)) is domain I, interacts with DnaA modulators. The tract at residues 74–113 (TPHYIFTKPQDTTSSQVEEATNLTLYNYSPKLVSIPYSDT) is domain II. Residues 114–331 (GLKEKYTFDN…GAINDITLIA (218 aa)) form a domain III, AAA+ region region. 4 residues coordinate ATP: Gly158, Gly160, Lys161, and Thr162. Residues 332–453 (RVKKIKDITI…EIESIKKKIK (122 aa)) form a domain IV, binds dsDNA region.

It belongs to the DnaA family. As to quaternary structure, oligomerizes as a right-handed, spiral filament on DNA at oriC.

It localises to the cytoplasm. Functionally, plays an essential role in the initiation and regulation of chromosomal replication. ATP-DnaA binds to the origin of replication (oriC) to initiate formation of the DNA replication initiation complex once per cell cycle. Binds the DnaA box (a 9 base pair repeat at the origin) and separates the double-stranded (ds)DNA. Forms a right-handed helical filament on oriC DNA; dsDNA binds to the exterior of the filament while single-stranded (ss)DNA is stabiized in the filament's interior. The ATP-DnaA-oriC complex binds and stabilizes one strand of the AT-rich DNA unwinding element (DUE), permitting loading of DNA polymerase. After initiation quickly degrades to an ADP-DnaA complex that is not apt for DNA replication. Binds acidic phospholipids. This Streptococcus pneumoniae serotype 19F (strain G54) protein is Chromosomal replication initiator protein DnaA.